A 592-amino-acid chain; its full sequence is MSLSQILTPSIQKAIQVLFDVSVDKIEFQTTRKEFEGDITMVIFPLLKVIKSNPAELGNKIGTYLVENVSEVARFNVVSGFLNIVISDSYYVDFFNGIKDQKQFGFLSPNPEEKAVMVEYSSPNTNKPLHLGHVRNNLLGYSVAEILKASGKKVYKTQIINDRGIHICKSMLAWEKFGNGETPESSDLKGDKLVGKYYVEFDKAYKTEINQLIETGKTEEEAKKQAPIIIEAQEMLKKWEAGDEQVIALWKKMNQWVYDGFATTYTNLGVNFDKYYYESNTYLLGKDVVQVGLDKGVFEKDPDGSVWIDLTDEGLDRKIVLRSDGTAVYMTQDIGTAIQRVKDMPDVGGMVYTVGNEQDYHFKVLFLILKKLGFDWASSLYHLSYGMVDLPSGKMKSREGTVVDADDLMQDMTDTAKQIAEDLGKLDSYSADEKAKLYKTIGLGALKYYILKVDPKKRILFNPEESVDFAGNTGPFIQYTYARIQSIIRKADFDFSNKIEIEELHEKEKELVKQIELFPEVIQNAAQNHSPALIANYTYDLVKEYNSFYQSVHILGEADLTKKIFRVQLSQKVAEVIKSAFSLLGIEVPERM.

The short motif at 123-133 (PNTNKPLHLGH) is the 'HIGH' region element.

Belongs to the class-I aminoacyl-tRNA synthetase family. In terms of assembly, monomer.

The protein localises to the cytoplasm. It catalyses the reaction tRNA(Arg) + L-arginine + ATP = L-arginyl-tRNA(Arg) + AMP + diphosphate. This chain is Arginine--tRNA ligase, found in Flavobacterium johnsoniae (strain ATCC 17061 / DSM 2064 / JCM 8514 / BCRC 14874 / CCUG 350202 / NBRC 14942 / NCIMB 11054 / UW101) (Cytophaga johnsonae).